The sequence spans 593 residues: Genetic interactor of prohibitins 3, mitochondrial (593 aa).

A mitochondrion-targeting transit peptide spans 1–61; it reads MLGRIRPFVR…NPSKPGFYRP (61 aa). A CP-type G domain is found at 142-349; sequence VESIDKIMST…IVDVPGFSAN (208 aa).

It belongs to the TRAFAC class YlqF/YawG GTPase family. GEP3 subfamily.

The protein resides in the mitochondrion. Its function is as follows. May be involved in the mitochondrial lipid metabolism. The polypeptide is Genetic interactor of prohibitins 3, mitochondrial (GEP3) (Debaryomyces hansenii (strain ATCC 36239 / CBS 767 / BCRC 21394 / JCM 1990 / NBRC 0083 / IGC 2968) (Yeast)).